Consider the following 195-residue polypeptide: Nicotinamide riboside kinase 1 (195 aa).

G10–T18 serves as a coordination point for ATP. Mg(2+) is bound by residues T17 and D36. The Proton acceptor role is filled by D36. Residues D36–F39 and Y55–D56 each bind substrate. R128 contacts ATP. Residues R129 and Y134–E135 contribute to the substrate site. ATP-binding positions include R132–Y134 and R172–E174.

It belongs to the uridine kinase family. NRK subfamily. In terms of assembly, monomer.

It carries out the reaction beta-nicotinamide D-riboside + ATP = beta-nicotinamide D-ribonucleotide + ADP + H(+). The enzyme catalyses beta-D-ribosylnicotinate + ATP = nicotinate beta-D-ribonucleotide + ADP + H(+). The protein operates within cofactor biosynthesis; NAD(+) biosynthesis. Its function is as follows. Catalyzes the phosphorylation of nicotinamide riboside (NR) and nicotinic acid riboside (NaR) to form nicotinamide mononucleotide (NMN) and nicotinic acid mononucleotide (NaMN). The protein is Nicotinamide riboside kinase 1 (Nmrk1) of Rattus norvegicus (Rat).